Reading from the N-terminus, the 363-residue chain is DNA replication and repair protein RecF (363 aa).

ATP is bound at residue glycine 30–threonine 37.

It belongs to the RecF family.

Its subcellular location is the cytoplasm. The RecF protein is involved in DNA metabolism; it is required for DNA replication and normal SOS inducibility. RecF binds preferentially to single-stranded, linear DNA. It also seems to bind ATP. This is DNA replication and repair protein RecF from Vibrio cholerae serotype O1 (strain ATCC 39541 / Classical Ogawa 395 / O395).